We begin with the raw amino-acid sequence, 245 residues long: Orotidine 5'-phosphate decarboxylase (245 aa).

Substrate contacts are provided by residues aspartate 22, lysine 44, 71–80, threonine 131, arginine 192, glutamine 201, glycine 221, and arginine 222; that span reads DLKFHDIPNT. Lysine 73 functions as the Proton donor in the catalytic mechanism.

This sequence belongs to the OMP decarboxylase family. Type 1 subfamily. As to quaternary structure, homodimer.

The catalysed reaction is orotidine 5'-phosphate + H(+) = UMP + CO2. It functions in the pathway pyrimidine metabolism; UMP biosynthesis via de novo pathway; UMP from orotate: step 2/2. Its function is as follows. Catalyzes the decarboxylation of orotidine 5'-monophosphate (OMP) to uridine 5'-monophosphate (UMP). In Escherichia coli O6:K15:H31 (strain 536 / UPEC), this protein is Orotidine 5'-phosphate decarboxylase.